A 486-amino-acid polypeptide reads, in one-letter code: Aspartyl/glutamyl-tRNA(Asn/Gln) amidotransferase subunit B (486 aa).

This sequence belongs to the GatB/GatE family. GatB subfamily. As to quaternary structure, heterotrimer of A, B and C subunits.

The catalysed reaction is L-glutamyl-tRNA(Gln) + L-glutamine + ATP + H2O = L-glutaminyl-tRNA(Gln) + L-glutamate + ADP + phosphate + H(+). It carries out the reaction L-aspartyl-tRNA(Asn) + L-glutamine + ATP + H2O = L-asparaginyl-tRNA(Asn) + L-glutamate + ADP + phosphate + 2 H(+). Allows the formation of correctly charged Asn-tRNA(Asn) or Gln-tRNA(Gln) through the transamidation of misacylated Asp-tRNA(Asn) or Glu-tRNA(Gln) in organisms which lack either or both of asparaginyl-tRNA or glutaminyl-tRNA synthetases. The reaction takes place in the presence of glutamine and ATP through an activated phospho-Asp-tRNA(Asn) or phospho-Glu-tRNA(Gln). In Orientia tsutsugamushi (strain Boryong) (Rickettsia tsutsugamushi), this protein is Aspartyl/glutamyl-tRNA(Asn/Gln) amidotransferase subunit B.